A 384-amino-acid polypeptide reads, in one-letter code: Ribosomal RNA small subunit methyltransferase H (384 aa).

Residues Gly-99–His-101, Asp-118, Tyr-145, Asp-169, and Gln-176 each bind S-adenosyl-L-methionine.

This sequence belongs to the methyltransferase superfamily. RsmH family.

Its subcellular location is the cytoplasm. It carries out the reaction cytidine(1402) in 16S rRNA + S-adenosyl-L-methionine = N(4)-methylcytidine(1402) in 16S rRNA + S-adenosyl-L-homocysteine + H(+). Specifically methylates the N4 position of cytidine in position 1402 (C1402) of 16S rRNA. The chain is Ribosomal RNA small subunit methyltransferase H from Mycobacteroides abscessus (strain ATCC 19977 / DSM 44196 / CCUG 20993 / CIP 104536 / JCM 13569 / NCTC 13031 / TMC 1543 / L948) (Mycobacterium abscessus).